The following is a 131-amino-acid chain: C-type natriuretic peptide 1 (131 aa).

The signal sequence occupies residues 1-22 (MLCPVLLCATLLLLTPFEVTEA). The propeptide occupies 23–109 (RALHPSADAV…KRAEPDRSRR (87 aa)). A disulfide bridge links C115 with C131.

Belongs to the natriuretic peptide family. In terms of tissue distribution, brain and spinal cord.

It localises to the secreted. Functionally, exhibits natriuretic and vasodepressant activity. Has cGMP-stimulating activity. May help to regulate body fluid homeostasis in a variety of aquatic environments. The protein is C-type natriuretic peptide 1 of Oryzias latipes (Japanese rice fish).